A 429-amino-acid polypeptide reads, in one-letter code: Histidine--tRNA ligase (429 aa).

Belongs to the class-II aminoacyl-tRNA synthetase family. In terms of assembly, homodimer.

The protein resides in the cytoplasm. The enzyme catalyses tRNA(His) + L-histidine + ATP = L-histidyl-tRNA(His) + AMP + diphosphate + H(+). The polypeptide is Histidine--tRNA ligase (Streptococcus pneumoniae serotype 2 (strain D39 / NCTC 7466)).